We begin with the raw amino-acid sequence, 114 residues long: As-peptide 126 (114 aa).

Positions 1-22 are cleaved as a signal peptide; the sequence is MSRALICSLALLAMLVISGTYA. 9 tandem repeats follow at residues 22–29, 30–37, 38–45, 46–53, 54–61, 62–69, 70–77, 78–85, and 86–93. Residues 22–93 form a 9 X 8 AA approximate tandem repeats of [AP]-[ILS]-[AP]-A-A-N-A-[DE] region; that stretch reads ASPAANAEAL…AEPLAAANAE (72 aa). A propeptide spanning residues 23–104 is cleaved from the precursor; sequence SPAANAEALA…SAGPSPLAAA (82 aa). Residues 82-96 show a composition bias toward low complexity; the sequence is ANAEPLAAANAEPSA. The interval 82-114 is disordered; sequence ANAEPLAAANAEPSAGPSPLAAAQDPPVVKMKG. The residue at position 105 (glutamine 105) is a Pyrrolidone carboxylic acid. Lysine amide is present on lysine 113.

In terms of tissue distribution, expressed by the venom gland.

The protein resides in the secreted. This is As-peptide 126 from Anoplius samariensis (Solitary wasp).